The following is a 63-amino-acid chain: Large ribosomal subunit protein uL30 (63 aa).

It belongs to the universal ribosomal protein uL30 family. As to quaternary structure, part of the 50S ribosomal subunit.

In Natranaerobius thermophilus (strain ATCC BAA-1301 / DSM 18059 / JW/NM-WN-LF), this protein is Large ribosomal subunit protein uL30.